The primary structure comprises 635 residues: Threonine--tRNA ligase (635 aa).

The TGS domain maps to 1–58; the sequence is MIRVICDNETFELPTGSTAADFASKIKNSHYFAGVVINDQIKDLSTTLSEGDVLKFVT. The segment at 237–528 is catalytic; sequence DHRVLGTKLD…LIEHFKGRFP (292 aa). Residues cysteine 328, histidine 379, and histidine 505 each coordinate Zn(2+).

It belongs to the class-II aminoacyl-tRNA synthetase family. In terms of assembly, homodimer. Zn(2+) serves as cofactor.

It localises to the cytoplasm. The catalysed reaction is tRNA(Thr) + L-threonine + ATP = L-threonyl-tRNA(Thr) + AMP + diphosphate + H(+). Catalyzes the attachment of threonine to tRNA(Thr) in a two-step reaction: L-threonine is first activated by ATP to form Thr-AMP and then transferred to the acceptor end of tRNA(Thr). Also edits incorrectly charged L-seryl-tRNA(Thr). The sequence is that of Threonine--tRNA ligase from Chlamydia felis (strain Fe/C-56) (Chlamydophila felis).